The chain runs to 274 residues: Large ribosomal subunit protein uL2cz/uL2cy (274 aa).

2 disordered regions span residues 1 to 21 (MAIHLYKTSTPSTRNGAVDSQ) and 224 to 252 (NPVDHPHGGGEGRAPIGRKKPVTPWGYPA).

This sequence belongs to the universal ribosomal protein uL2 family. In terms of assembly, part of the 50S ribosomal subunit.

It is found in the plastid. The protein localises to the chloroplast. The protein is Large ribosomal subunit protein uL2cz/uL2cy (rpl2-A) of Olimarabidopsis pumila (Dwarf rocket).